The primary structure comprises 745 residues: Single-minded homolog 1-A (745 aa).

Positions 1-53 constitute a bHLH domain; the sequence is MKEKSKNAGRTRREKENSEFYELAKLLPLPSAITSQSDKASIIRLTTSYLKMR. PAS domains are found at residues 77-147 and 218-288; these read GREL…QPYH and PPSA…LVKG. The 410-residue stretch at 336–745 folds into the Single-minded C-terminal domain; sequence EYKGLQLSLD…GTSVIITNGS (410 aa). Polar residues predominate over residues 350–364; it reads TKPSFTYNSPSNPVT. 2 disordered regions span residues 350-413 and 529-563; these read TKPS…LTDS and EDSA…EPSK. Residues 368-387 carry the Nuclear localization signal motif; it reads RVGKSRVSRTKTKTRLSPYS. Basic residues predominate over residues 369-381; the sequence is VGKSRVSRTKTKT. The span at 532 to 544 shows a compositional bias: low complexity; sequence AVSSAPDGGSASD.

In terms of assembly, efficient DNA binding requires dimerization with another bHLH protein. Heterodimer of sim1a and arnt. In terms of tissue distribution, expressed in embryonic forebrain at the eleven somite stage. Detected in brain throughout embryonic development.

The protein localises to the nucleus. Functionally, transcriptional factor that may have pleiotropic effects during embryogenesis and in the adult. The sequence is that of Single-minded homolog 1-A (sim1a) from Danio rerio (Zebrafish).